A 76-amino-acid polypeptide reads, in one-letter code: Small ribosomal subunit protein uS17 (76 aa).

It belongs to the universal ribosomal protein uS17 family. As to quaternary structure, part of the 30S ribosomal subunit.

One of the primary rRNA binding proteins, it binds specifically to the 5'-end of 16S ribosomal RNA. The polypeptide is Small ribosomal subunit protein uS17 (Dinoroseobacter shibae (strain DSM 16493 / NCIMB 14021 / DFL 12)).